Here is a 138-residue protein sequence, read N- to C-terminus: Brain natriuretic peptide (138 aa).

An N-terminal signal peptide occupies residues 1-22 (MRLSSMWLCSLLLILKLQLSST). 2 disordered regions span residues 50-84 (EQMAVDQSAPGQRDLLDSLSTEDAGDGPQPDAGLD) and 99-138 (SVRNDSSRRSSGCFGRRMDRIGSMSSLGCNTVGRYNPKQR). Cysteine 111 and cysteine 127 form a disulfide bridge.

Belongs to the natriuretic peptide family.

The protein resides in the secreted. In terms of biological role, cardiac hormone which may function as a paracrine antifibrotic factor in the heart. Also plays a key role in cardiovascular homeostasis through natriuresis, diuresis, vasorelaxation, and inhibition of renin and aldosterone secretion. This is Brain natriuretic peptide (nppb) from Oreochromis mossambicus (Mozambique tilapia).